Reading from the N-terminus, the 500-residue chain is MSKQETYIDYNYIERLNAVNLNRSYDEEIVFIMTVGGVVKVKKELLVSVSNYFKLITKNQSNEITVSFQYESFLDIIKYIETGIVTIDLDNVENIFSISCSKAIDFLKNSCIDFMSKHITDSTCVKIYKIGFSNGCFAVYNDAIAYIRKRFTKIETDILLSLSLFDLRIILKSGELDVSSEDDVLLFIIKWSRHKKSNRRKSFTLVTEVLRYNYLSIYGKYKLTKWLARFGKNNNVELNENELPRISYQHRFTNRRYTMVTPSSFSINMLGNVSVKNELSIINSIAENHNPYCGSVLMNDILYLIGGINKSLDPVSDITSVDTRSFIELHTPPLLHPRKCPGVAIFKNRIYVVGGIGYDGPLKTVESWSPGEQQWREEVPLLQPRFNPCIIGTDNDLYVVGGISEDDKTIEIYSYEENTWSIGNAMNYSHFGGCIAYHHGYIYMIGGLSFIDNIHVFTMVEKYNPHSNKWTVEKSLPFPRFNSSLCIIEDSIAIIGWIYY.

Residues 27-89 (EEIVFIMTVG…IETGIVTIDL (63 aa)) form the BTB domain. 4 Kelch repeats span residues 301-348 (ILYL…IFKN), 349-395 (RIYV…GTDN), 397-440 (LYVV…YHHG), and 441-490 (YIYM…IIED).

The protein belongs to the poxviruses Kelch family.

The protein is Protein C13 of Swinepox virus (strain Kasza) (SWPV).